Consider the following 216-residue polypeptide: Probable nicotinate-nucleotide adenylyltransferase (216 aa).

The protein belongs to the NadD family.

The catalysed reaction is nicotinate beta-D-ribonucleotide + ATP + H(+) = deamido-NAD(+) + diphosphate. It functions in the pathway cofactor biosynthesis; NAD(+) biosynthesis; deamido-NAD(+) from nicotinate D-ribonucleotide: step 1/1. In terms of biological role, catalyzes the reversible adenylation of nicotinate mononucleotide (NaMN) to nicotinic acid adenine dinucleotide (NaAD). The protein is Probable nicotinate-nucleotide adenylyltransferase of Klebsiella pneumoniae subsp. pneumoniae (strain ATCC 700721 / MGH 78578).